The sequence spans 437 residues: Elongation factor Tu, mitochondrial (437 aa).

A mitochondrion-targeting transit peptide spans Met-1–Tyr-38. In terms of domain architecture, tr-type G spans Lys-46–Glu-242. The G1 stretch occupies residues Gly-55–Thr-62. Residue Gly-55–Thr-62 coordinates GTP. The tract at residues Gly-96–Ser-100 is G2. The segment at Asp-117–Gly-120 is G3. GTP-binding positions include Asp-117–His-121 and Asn-172–Asp-175. Residues Asn-172–Asp-175 are G4. The interval Ser-210 to Leu-212 is G5.

It belongs to the TRAFAC class translation factor GTPase superfamily. Classic translation factor GTPase family. EF-Tu/EF-1A subfamily. In terms of processing, the precursor is processed in two steps involving mitochondrial intermediate peptidase (MIP) and mitochondrial processing peptidase (MPP).

The protein resides in the mitochondrion. It participates in protein biosynthesis; polypeptide chain elongation. Functionally, G-protein that, in its active GTP-bound form, binds to and delivers aminoacyl-tRNA to the A-site of ribosomes during protein biosynthesis. In the presence of a correct codon-anticodon match between the aminoacyl-tRNA and the A-site codon of the ribosome-bound mRNA, the ribosome acts as a GTPase activator and the GTP is hydrolyzed. The inactive GDP-bound form leaves the ribosome and must be recycled before binding another molecule of aminoacyl-tRNA. Required for mitochondrial protein biosynthesis and maintenance of mitochondrial DNA. The polypeptide is Elongation factor Tu, mitochondrial (TUF1) (Saccharomyces cerevisiae (strain ATCC 204508 / S288c) (Baker's yeast)).